Reading from the N-terminus, the 112-residue chain is ATP synthase epsilon chain (112 aa).

It belongs to the ATPase epsilon chain family. F-type ATPases have 2 components, CF(1) - the catalytic core - and CF(0) - the membrane proton channel. CF(1) has five subunits: alpha(3), beta(3), gamma(1), delta(1), epsilon(1). CF(0) has three main subunits: a, b and c.

Its subcellular location is the cell inner membrane. In terms of biological role, produces ATP from ADP in the presence of a proton gradient across the membrane. This Rickettsia prowazekii (strain Madrid E) protein is ATP synthase epsilon chain (atpC).